Consider the following 87-residue polypeptide: Putative protein KleG (87 aa).

2 disordered regions span residues 1 to 23 (MRHS…WPSS) and 61 to 87 (IPTT…IFSR). Positions 68 to 78 (RGRRPQRHRPS) are enriched in basic residues.

The polypeptide is Putative protein KleG (kleG) (Escherichia coli).